The sequence spans 440 residues: Sequestosome-1 (440 aa).

An N-acetylalanine modification is found at A2. The interval 2 to 50 is interaction with LCK; that stretch reads ASLTVKAYLLGKEDAAREIRRFSFCCSPEPEAEAEAAAGPGPCERLLSR. In terms of domain architecture, PB1 spans 3 to 102; the sequence is SLTVKAYLLG…DIFRIYIKEK (100 aa). A Phosphoserine modification is found at S24. The segment at 43-107 is interaction with PRKCZ and dimerization; the sequence is PCERLLSRVA…YIKEKKECRR (65 aa). An interaction with PAWR region spans residues 50-80; it reads RVAALFPALRPGGFQAHYRDEDGDLVAFSSD. K91 is covalently cross-linked (Glycyl lysine isopeptide (Lys-Gly) (interchain with G-Cter in ubiquitin)). The interval 122–224 is interaction with GABRR3; it reads VHPNVICDGC…EARPGPTAES (103 aa). Residues 123-173 form a ZZ-type zinc finger; it reads HPNVICDGCNGPVVGTRYKCSVCPDYDLCSVCEGKGLHRGHTKLAFPSPFG. Positions 128, 131, 142, and 145 each coordinate Zn(2+). Y148 carries the post-translational modification Phosphotyrosine. Zn(2+)-binding residues include C151, C154, H160, and H163. Residues S170 and S176 each carry the phosphoserine modification. Residues 170–220 form an LIM protein-binding (LB) region; that stretch reads SPFGHLSEGFSHSRWLRKVKHGHFGWPGWEMGPPGNWSPRPPRAGEARPGP. Residue K189 forms a Glycyl lysine isopeptide (Lys-Gly) (interchain with G-Cter in ubiquitin) linkage. The disordered stretch occupies residues 196–235; that stretch reads PGWEMGPPGNWSPRPPRAGEARPGPTAESASGPSEDPSVN. S207, S233, S249, and S266 each carry phosphoserine. The TRAF6-binding motif lies at 228–233; the sequence is PSEDPS. The tract at residues 264-390 is disordered; sequence KRSRLTPVSP…ALYPHLPPEA (127 aa). Residue T269 is modified to Phosphothreonine. The tract at residues 269–440 is interaction with NTRK1; sequence TPVSPESSST…IQYSKHPPPL (172 aa). Residues S272 and S282 each carry the phosphoserine modification. Over residues 283 to 296 the composition is skewed to low complexity; sequence SSQPSSCCSDPSKP. Residues C289 and C290 are each lipidated (S-palmitoyl cysteine). Phosphoserine is present on S306. Over residues 310 to 324 the composition is skewed to basic and acidic residues; the sequence is QMRKIALESEGRPEE. The interval 321–342 is MAP1LC3B-binding; it reads RPEEQMESDNCSGGDDDWTHLS. A phosphoserine mark is found at S328 and S332. The LIR signature appears at 336–341; sequence DDWTHL. Residues 337-347 show a composition bias toward basic and acidic residues; it reads DWTHLSSKEVD. The interval 347–352 is interaction with KEAP1; sequence DPSTGE. Residue S349 is modified to Phosphoserine; by ULK1. The span at 351-373 shows a compositional bias: polar residues; that stretch reads GELQSLQMPESEGPSSLDPSQEG. A phosphoserine mark is found at S355, S361, S365, and S366. Residues 389–434 form the UBA domain; the sequence is EADPRLIESLSQMLSMGFSDEGGWLTRLLQTKNYDIGAALDTIQYS. At S403 the chain carries Phosphoserine; by CK2, ULK1 and TBK1. At S407 the chain carries Phosphoserine; by ULK1. K420 and K435 each carry N6-acetyllysine; alternate. A Glycyl lysine isopeptide (Lys-Gly) (interchain with G-Cter in ubiquitin); alternate cross-link involves residue K420. K435 is covalently cross-linked (Glycyl lysine isopeptide (Lys-Gly) (interchain with G-Cter in SUMO2); alternate).

Homooligomer or heterooligomer; may form homotypic arrays. Dimerization interferes with ubiquitin binding. Component of a ternary complex with PAWR and PRKCZ. Forms a complex with JUB/Ajuba, PRKCZ and TRAF6. Identified in a complex with TRAF6 and CYLD. Identified in a heterotrimeric complex with ubiquitin and ZFAND5, where ZFAND5 and SQSTM1 both interact with the same ubiquitin molecule. Interacts (via LIR motif) with MAP1LC3A and MAP1LC3B, as well as with other ATG8 family members, including GABARAP, GABARAPL1 and GABARAPL2; these interactions are necessary for the recruitment MAP1 LC3 family members to inclusion bodies containing polyubiquitinated protein aggregates and for their degradation by autophagy. Interacts directly with PRKCI and PRKCZ. Interacts with EBI3, LCK, RASA1, NR2F2, NTRK1, NTRK2, NTRK3, NBR1, MAP2K5 and MAPKAPK5. Upon TNF-alpha stimulation, interacts with RIPK1 probably bridging IKBKB to the TNF-R1 complex composed of TNF-R1/TNFRSF1A, TRADD and RIPK1. Interacts with the proteasome subunits PSMD4 and PSMC2. Interacts with TRAF6. Interacts with 'Lys-63'-linked polyubiquitinated MAPT/TAU. Interacts with FHOD3. Interacts with CYLD. Interacts with SESN1. Interacts with SESN2. Interacts with ULK1. Interacts with UBD. Interacts with WDR81; the interaction is direct and regulates the interaction of SQSTM1 with ubiquitinated proteins. Interacts with WDFY3; this interaction is required to recruit WDFY3 to cytoplasmic bodies and to PML bodies. Interacts with LRRC25. Interacts with STING1; leading to relocalization of STING1 to autophagosomes. Interacts (when phosphorylated at Ser-349) with KEAP1; the interaction is direct and inactivates the BCR(KEAP1) complex by sequestering KEAP1 in inclusion bodies, promoting its degradation. Interacts with MOAP1; promoting dissociation of SQSTM1 inclusion bodies that sequester KEAP1. Interacts with GBP1. Interacts with TAX1BP1. Interacts with (ubiquitinated) PEX5; specifically binds PEX5 ubiquitinated at 'Lys-209' in response to reactive oxygen species (ROS). Interacts (via PB1 domain) with TNS2; the interaction leads to sequestration of TNS2 in cytoplasmic aggregates with SQSTM1 and promotes TNS2 ubiquitination and proteasomal degradation. Interacts with IRS1; the interaction is disrupted by the presence of tensin TNS2. Interacts with TRIM5. Interacts with TRIM11 (when ubiquitinated); promoting AIM2 recruitment to autophagosomes and autophagy-dependent degradation of AIM2. Interacts with TRIM13. Interacts with TRIM16. Interacts with TRIM23. Interacts with TRIM50. Interacts with TRIM55. Interacts with ECSIT; this interaction inhibits TLR4 signaling via functional regulation of the TRAF6-ECSIT complex. Interacts with GABRR1, GABRR2 and GABRR3. Interacts with WDR83. Interacts with GRB2. Interacts with USP12; the interaction is independent of USP12 deubiquitinase activity and may be involved in regulation of autophagic flux. Interacts with ASB6. In terms of processing, phosphorylation at Ser-407 by ULK1 destabilizes the UBA dimer interface and increases binding affinity to ubiquitinated proteins. Phosphorylation at Ser-407 also primes for subsequent phosphorylation at Ser-403. Phosphorylation at Ser-403 by CK2 or ULK1 promotes binding to ubiquitinated proteins by increasing the affinity between the UBA domain and polyubiquitin chains. Phosphorylation at Ser-403 by ULK1 is stimulated by SESN2. Phosphorylated at Ser-403 by TBK1, leading to promote relocalization of 'Lys-63'-linked ubiquitinated STING1 to autophagosomes. Phosphorylation at Ser-349 by ULK1 promotes interaction with KEAP1 and inactivation of the BCR(KEAP1) complex, promoting NFE2L2/NRF2 nuclear accumulation and expression of phase II detoxifying enzymes. Phosphorylated in vitro by TTN. Post-translationally, ubiquitinated by UBE2J1 and RNF26 at Lys-435: ubiquitinated SQSTM1 attracts specific vesicle-associated adapters, forming a molecular bridge that restrains cognate vesicles in the perinuclear region and organizes the endosomal pathway for efficient cargo transport. Ubiquitination by UBE2D2 and UBE2D3 increases its ability to bind polyubiquitin chains by destabilizing the UBA dimer interface. Deubiquitination by USP15 releases target vesicles for fast transport into the cell periphery. Ubiquitinated by the BCR(KEAP1) complex at Lys-420, increasing SQSTM1 sequestering activity and promoting its degradation. Ubiquitinated via 'Lys-29' and 'Lys-33'-linked polyubiquitination leading to xenophagic targeting of bacteria and inhibition of their replication. Acetylated at Lys-420 and Lys-435 by KAT5/TIP60, promotes activity by destabilizing the UBA dimer interface and increases binding affinity to ubiquitinated proteins. Deacetylated by HDAC6. In terms of processing, palmitoylation at Cys-289 and Cys-290 by ZDHHC19 is required for efficient autophagic degradation of SQSTM1-cargo complexes by promoting affinity for ATG8 proteins and recruitment of p62 bodies to autophagosomes. Dealmitoylated at Cys-289 and Cys-290 by LYPLA1. Post-translationally, (Microbial infection) Cleaved by S.pyogenes SpeB protease; leading to its degradation. Degradation by SpeB prevents autophagy, promoting to S.pyogenes intracellular replication. (Microbial infection) Deubiquitinated by Epstein-Barr virus BPLF1; leading to inhibition of the recruitment of MAP1LC3A/LC3 to SQSTM1-positive structures. As to expression, ubiquitously expressed.

The protein resides in the cytoplasmic vesicle. It localises to the autophagosome. The protein localises to the preautophagosomal structure. It is found in the cytoplasm. Its subcellular location is the cytosol. The protein resides in the nucleus. It localises to the PML body. The protein localises to the late endosome. It is found in the lysosome. Its subcellular location is the endoplasmic reticulum. The protein resides in the myofibril. It localises to the sarcomere. In terms of biological role, molecular adapter required for selective macroautophagy (aggrephagy) by acting as a bridge between polyubiquitinated proteins and autophagosomes. Promotes the recruitment of ubiquitinated cargo proteins to autophagosomes via multiple domains that bridge proteins and organelles in different steps. SQSTM1 first mediates the assembly and removal of ubiquitinated proteins by undergoing liquid-liquid phase separation upon binding to ubiquitinated proteins via its UBA domain, leading to the formation of insoluble cytoplasmic inclusions, known as p62 bodies. SQSTM1 then interacts with ATG8 family proteins on autophagosomes via its LIR motif, leading to p62 body recruitment to autophagosomes, followed by autophagic clearance of ubiquitinated proteins. SQSTM1 is itself degraded along with its ubiquitinated cargos. Also required to recruit ubiquitinated proteins to PML bodies in the nucleus. Also involved in autophagy of peroxisomes (pexophagy) in response to reactive oxygen species (ROS) by acting as a bridge between ubiquitinated PEX5 receptor and autophagosomes. Acts as an activator of the NFE2L2/NRF2 pathway via interaction with KEAP1: interaction inactivates the BCR(KEAP1) complex by sequestering the complex in inclusion bodies, promoting nuclear accumulation of NFE2L2/NRF2 and subsequent expression of cytoprotective genes. Promotes relocalization of 'Lys-63'-linked ubiquitinated STING1 to autophagosomes. Involved in endosome organization by retaining vesicles in the perinuclear cloud: following ubiquitination by RNF26, attracts specific vesicle-associated adapters, forming a molecular bridge that restrains cognate vesicles in the perinuclear region and organizes the endosomal pathway for efficient cargo transport. Sequesters tensin TNS2 into cytoplasmic puncta, promoting TNS2 ubiquitination and proteasomal degradation. May regulate the activation of NFKB1 by TNF-alpha, nerve growth factor (NGF) and interleukin-1. May play a role in titin/TTN downstream signaling in muscle cells. Adapter that mediates the interaction between TRAF6 and CYLD. In Homo sapiens (Human), this protein is Sequestosome-1.